Reading from the N-terminus, the 369-residue chain is Tetraacyldisaccharide 4'-kinase (369 aa).

Residue 52–59 participates in ATP binding; it reads TVGGTGKT.

Belongs to the LpxK family.

It carries out the reaction a lipid A disaccharide + ATP = a lipid IVA + ADP + H(+). The protein operates within glycolipid biosynthesis; lipid IV(A) biosynthesis; lipid IV(A) from (3R)-3-hydroxytetradecanoyl-[acyl-carrier-protein] and UDP-N-acetyl-alpha-D-glucosamine: step 6/6. Transfers the gamma-phosphate of ATP to the 4'-position of a tetraacyldisaccharide 1-phosphate intermediate (termed DS-1-P) to form tetraacyldisaccharide 1,4'-bis-phosphate (lipid IVA). The polypeptide is Tetraacyldisaccharide 4'-kinase (Parabacteroides distasonis (strain ATCC 8503 / DSM 20701 / CIP 104284 / JCM 5825 / NCTC 11152)).